A 286-amino-acid polypeptide reads, in one-letter code: ATP synthase gamma chain (286 aa).

The protein belongs to the ATPase gamma chain family. F-type ATPases have 2 components, CF(1) - the catalytic core - and CF(0) - the membrane proton channel. CF(1) has five subunits: alpha(3), beta(3), gamma(1), delta(1), epsilon(1). CF(0) has three main subunits: a, b and c.

Its subcellular location is the cell inner membrane. In terms of biological role, produces ATP from ADP in the presence of a proton gradient across the membrane. The gamma chain is believed to be important in regulating ATPase activity and the flow of protons through the CF(0) complex. This is ATP synthase gamma chain from Solibacter usitatus (strain Ellin6076).